The primary structure comprises 392 residues: Membrane cofactor protein (392 aa).

The first 34 residues, 1 to 34 (MEPPGRRECPFPSWRFPGLLLAAMVLLLYSFSDA), serve as a signal peptide directing secretion. Intrachain disulfides connect C35–C80, C64–C94, C99–C141, C127–C157, C162–C210, C191–C223, C228–C270, and C256–C283. Sushi domains are found at residues 35-96 (CEEP…ACYR), 97-159 (ETCP…ICEK), 160-225 (VLCT…ECKV), and 226-285 (VKCR…KCLK). The Extracellular segment spans residues 35 to 343 (CEEPPTFEAM…PEEGILDSLD (309 aa)). N-linked (GlcNAc...) asparagine glycosylation is found at N83 and N114. T163 is a glycosylation site (O-linked (GalNAc...) threonine). N273 is a glycosylation site (N-linked (GlcNAc...) asparagine). 2 O-linked (GalNAc...) serine glycosylation sites follow: S290 and S291. The span at 291 to 315 (STKPPALSHSVSTSSTTKSPASSAS) shows a compositional bias: low complexity. Residues 291–328 (STKPPALSHSVSTSSTTKSPASSASGPRPTYKPPVSNY) are disordered. T292 carries an O-linked (GalNAc...) threonine glycan. S298, S300, and S302 each carry an O-linked (GalNAc...) serine glycan. A glycan (O-linked (GalNAc...) threonine) is linked at T303. Residues S304 and S305 are each glycosylated (O-linked (GalNAc...) serine). O-linked (GalNAc...) threonine glycans are attached at residues T306 and T307. Residues S309, S312, S313, and S315 are each glycosylated (O-linked (GalNAc...) serine). T320 carries an O-linked (GalNAc...) threonine glycan. Position 321 is a phosphotyrosine (Y321). An O-linked (GalNAc...) serine glycan is attached at S326. Phosphotyrosine is present on residues D340, I354, V355, L369, Q370, and H384. Residues 344–366 (VWVIAVIVIAIVVGVAVICVVPY) form a helical membrane-spanning segment. Over 367 to 392 (RYLQRRKKKGTYLTDETHREVKFTSL) the chain is Cytoplasmic.

In terms of assembly, interacts with C3b. Interacts with C4b. Interacts with moesin/MSN. (Microbial infection) Interacts (via N-terminus) with measles virus H protein; this interaction allows attachment and viral entry of vaccine and laboratory-adapted strains. As to quaternary structure, (Microbial infection) Interacts with human herpesvirus 6 GH protein. In terms of assembly, (Microbial infection) Interacts with human adenovirus B/D fiber protein. (Microbial infection) Binds to Streptococcus pyogenes M protein and to type IV pili from Neisseria. N-glycosylated on Asn-83; Asn-114 and Asn-273 in most tissues, but probably less N-glycosylated in testis. N-glycosylation on Asn-114 and Asn-273 is required for cytoprotective function. N-glycosylation on Asn-114 is required for Measles virus binding. N-glycosylation on Asn-273 is required for Neisseria binding. N-glycosylation is not required for human adenovirus binding. In terms of processing, extensively O-glycosylated in the Ser/Thr-rich domain. O-glycosylation is required for Neisseria binding but not for Measles virus or human adenovirus binding. Post-translationally, in epithelial cells, isoforms B/D/F/H/J/L/3 are phosphorylated by YES1 in response to infection by Neisseria gonorrhoeae; which promotes infectivity. In T-cells, these isoforms may be phosphorylated by LCK. As to expression, expressed by all cells except erythrocytes.

The protein localises to the cytoplasmic vesicle. Its subcellular location is the secretory vesicle. It is found in the acrosome inner membrane. In terms of biological role, acts as a cofactor for complement factor I, a serine protease which protects autologous cells against complement-mediated injury by cleaving C3b and C4b deposited on host tissue. May be involved in the fusion of the spermatozoa with the oocyte during fertilization. Also acts as a costimulatory factor for T-cells which induces the differentiation of CD4+ into T-regulatory 1 cells. T-regulatory 1 cells suppress immune responses by secreting interleukin-10, and therefore are thought to prevent autoimmunity. Its function is as follows. (Microbial infection) A number of viral and bacterial pathogens seem to bind MCP in order to exploit its immune regulation property and directly induce an immunosuppressive phenotype in T-cells. (Microbial infection) Acts as a receptor for Adenovirus subgroup B2 and Ad3. Functionally, (Microbial infection) Acts as a receptor for cultured Measles virus. In terms of biological role, (Microbial infection) Acts as a receptor for Herpesvirus 6/HHV-6. Its function is as follows. (Microbial infection) May act as a receptor for pathogenic bacteria Neisseria and Streptococcus pyogenes. This is Membrane cofactor protein (CD46) from Homo sapiens (Human).